Reading from the N-terminus, the 173-residue chain is Ribonuclease H (173 aa).

The interval 1–20 (MKATSKAKTHPPGATAAKDP) is disordered. The region spanning 20-162 (PQKQVIIYTD…CDVLSKEAAG (143 aa)) is the RNase H type-1 domain. Aspartate 29, glutamate 67, aspartate 89, and aspartate 154 together coordinate Mg(2+).

The protein belongs to the RNase H family. As to quaternary structure, monomer. Requires Mg(2+) as cofactor.

It is found in the cytoplasm. The enzyme catalyses Endonucleolytic cleavage to 5'-phosphomonoester.. Endonuclease that specifically degrades the RNA of RNA-DNA hybrids. The protein is Ribonuclease H of Syntrophus aciditrophicus (strain SB).